The following is a 542-amino-acid chain: Glucose-6-phosphate isomerase 2 (542 aa).

Glu-353 serves as the catalytic Proton donor. Catalysis depends on residues His-384 and Lys-505.

The protein belongs to the GPI family.

The protein resides in the cytoplasm. The enzyme catalyses alpha-D-glucose 6-phosphate = beta-D-fructose 6-phosphate. The protein operates within carbohydrate biosynthesis; gluconeogenesis. Its pathway is carbohydrate degradation; glycolysis; D-glyceraldehyde 3-phosphate and glycerone phosphate from D-glucose: step 2/4. Functionally, catalyzes the reversible isomerization of glucose-6-phosphate to fructose-6-phosphate. The sequence is that of Glucose-6-phosphate isomerase 2 from Cupriavidus pinatubonensis (strain JMP 134 / LMG 1197) (Cupriavidus necator (strain JMP 134)).